The primary structure comprises 138 residues: uncharacterized protein (138 aa).

A run of 2 helical transmembrane segments spans residues 21–43 and 48–65; these read TAFILLIVLAGFGYTAYKIAGGA and SLIAAAIFALFISLYAII.

It is found in the cell membrane. This is an uncharacterized protein from Archaeoglobus fulgidus (strain ATCC 49558 / DSM 4304 / JCM 9628 / NBRC 100126 / VC-16).